A 529-amino-acid polypeptide reads, in one-letter code: Potassium voltage-gated channel subfamily A member 6 (529 aa).

Positions Met-1–Gly-33 are disordered. Over Met-1 to Gly-171 the chain is Cytoplasmic. Ser-3 bears the Phosphoserine mark. Residues Pro-172–Leu-193 form a helical membrane-spanning segment. At Glu-194–Pro-262 the chain is on the extracellular side. A compositionally biased stretch (low complexity) spans Gly-210–Gly-220. A disordered region spans residues Gly-210 to Thr-233. The helical transmembrane segment at Phe-263–Ala-284 threads the bilayer. Cys-285 is lipidated: S-palmitoyl cysteine. Residues Cys-285–Ile-295 lie on the Cytoplasmic side of the membrane. The chain crosses the membrane as a helical span at residues Met-296–Val-316. The Extracellular portion of the chain corresponds to Gln-317–Ser-337. A helical; Voltage-sensor membrane pass occupies residues Leu-338–His-358. Residues Ser-359–Met-373 lie on the Cytoplasmic side of the membrane. The tract at residues Lys-360 to Met-373 is S4-S5 linker. A helical membrane pass occupies residues Arg-374–Tyr-395. Residues Phe-396–Ile-409 are Extracellular-facing. The segment at residues Pro-410 to Thr-421 is an intramembrane region (helical). Positions Thr-422–Asp-427 match the Selectivity filter motif. The stretch at Thr-422–Tyr-429 is an intramembrane region. Topologically, residues Pro-430–Lys-436 are extracellular. Residues Ile-437–Tyr-465 traverse the membrane as a helical segment. Topologically, residues His-466–Val-529 are cytoplasmic. The segment at Asp-488–Leu-513 is disordered. The span at Asp-500–Pro-510 shows a compositional bias: basic and acidic residues. A Phosphoserine; by PKA modification is found at Ser-511. A PDZ-binding motif is present at residues Thr-527–Val-529.

It belongs to the potassium channel family. A (Shaker) (TC 1.A.1.2) subfamily. Kv1.6/KCNA6 sub-subfamily. As to quaternary structure, homotetramer and heterotetramer of potassium channel proteins. Interacts with KCNAB1 and KCNAB2.

The protein resides in the cell membrane. The catalysed reaction is K(+)(in) = K(+)(out). Voltage-gated potassium channel that mediates transmembrane potassium transport in excitable membranes. Forms tetrameric potassium-selective channels through which potassium ions pass in accordance with their electrochemical gradient. The channel alternates between opened and closed conformations in response to the voltage difference across the membrane. Can form functional homotetrameric channels and heterotetrameric channels that contain variable proportions of KCNA1, KCNA2, KCNA4, KCNA6, and possibly other family members as well; channel properties depend on the type of alpha subunits that are part of the channel. Channel properties are modulated by cytoplasmic beta subunits that regulate the subcellular location of the alpha subunits and promote rapid inactivation. Homotetrameric channels display rapid activation and slow inactivation. This chain is Potassium voltage-gated channel subfamily A member 6 (KCNA6), found in Homo sapiens (Human).